A 183-amino-acid polypeptide reads, in one-letter code: Ubiquitin carboxyl-terminal hydrolase 17-like protein 23 (183 aa).

A USP domain is found at 80–183 (AGLQNMGNTC…KACLPGHKQV (104 aa)).

This sequence belongs to the peptidase C19 family. USP17 subfamily.

The protein localises to the nucleus. It localises to the endoplasmic reticulum. This is Ubiquitin carboxyl-terminal hydrolase 17-like protein 23 (USP17L23) from Homo sapiens (Human).